We begin with the raw amino-acid sequence, 955 residues long: MTTPRFLPSSPPGQARSDLYTTLVSSSPDLPSINELVSRYAKKPKPLRSGSNAASIPTTATTTFTTAAKLLQSAQAEQADLVETLPPPRAKTKAKPKQKDPPEVVDLSPDLPVNIPEPQPERRKARKTANGVTKKKRGGGEESVADDATNEITTPTKNQPWKFFKSPSPRTTSDLEITGFQEVAATTAPVTTSTTDLTKGTASAQNKVTKSRVRKTSSAASRKKKAETVSRHFAVPDDVSTAPEPITVPDDAPEEQLFNLEPAVARRLDWTPPRETNTADLCPVSSNAKEVTSTLDGALSAAPAAVQNVFLTLQDKFAYPVEQVARRPDSPSKELGPPPEVIKKRKVIQLVGPSNDSKIPNQASPVKSKAPKKKPRTITDLATAAYTTEGKQSNAPAKKGTLTSYLEGQGEQVFQHCHPDSRLRKPERKRKPKGRGQVLLSPLSAIDQSARQDFVFGTSSQLAQEHSPTFLRDLHAALRQSNDFSDDPFASPIMAAPQGRKLWTAGARGEEGDLMNIEVIDLVDSPAFPDDPDAIVRAEMQKSPSRSEPKGIKNRRTPMVNLDSSEIDISEPHARDLESANSAEHTLKTQASKSTHFASTTPPRPTKITMVPACENTAEPPIVASDVDSDNEPPPSNQQAYQMPPPPRPVVPEETAIPRPNFEVMTDTQLSKQVSSYGFKSVKKRSAMIALLNQCWESKAGATGAAGQSSAFATTSRTSAPRGPRGKTSTAAAAAKSPTKRPVGRPRKNSVGASGDVTVVEATTPVKRPRGRPKKNAKAEASPDMMQNIAASMPPTVAAAVKTPRRRKKAATQPAVEILDSDGEAGLSPSPSLSPEPVFSSPEKDSVDVSIGEHTTMSLAVTPTAQQAELFTRITRAVKSAPRSTDPDKPSWHEKMLMYDPIVLEDLAAWLNSGQLDRVGYDGEVAPADVKMWCESKSICCLWRMSYRGRERKRL.

7 disordered regions span residues 75–173 (QAEQ…RTTS), 189–231 (PVTT…TVSR), 352–376 (GPSN…KKPR), 539–608 (EMQK…PTKI), 621–648 (PIVA…PPPR), 705–784 (AAGQ…ASPD), and 819–846 (LDSD…EKDS). Positions 123–137 (RKARKTANGVTKKKR) are enriched in basic residues. Over residues 150 to 159 (NEITTPTKNQ) the composition is skewed to polar residues. Residues 189–198 (PVTTSTTDLT) are compositionally biased toward low complexity. The span at 209–225 (TKSRVRKTSSAASRKKK) shows a compositional bias: basic residues. Polar residues predominate over residues 352 to 362 (GPSNDSKIPNQ). The span at 539–551 (EMQKSPSRSEPKG) shows a compositional bias: basic and acidic residues. The span at 579-601 (SANSAEHTLKTQASKSTHFASTT) shows a compositional bias: polar residues. 2 stretches are compositionally biased toward low complexity: residues 705 to 720 (AAGQ…RTSA) and 727 to 737 (KTSTAAAAAKS). Composition is skewed to basic residues over residues 738–748 (PTKRPVGRPRK) and 767–776 (KRPRGRPKKN). The span at 828–841 (SPSPSLSPEPVFSS) shows a compositional bias: low complexity.

The protein belongs to the SLX4 family. In terms of assembly, forms a heterodimer with SLX1. In terms of processing, phosphorylated in response to DNA damage.

The protein localises to the nucleus. Functionally, regulatory subunit of the SLX1-SLX4 structure-specific endonuclease that resolves DNA secondary structures generated during DNA repair and recombination. Has endonuclease activity towards branched DNA substrates, introducing single-strand cuts in duplex DNA close to junctions with ss-DNA. This Pyricularia oryzae (strain 70-15 / ATCC MYA-4617 / FGSC 8958) (Rice blast fungus) protein is Structure-specific endonuclease subunit SLX4.